Consider the following 308-residue polypeptide: Pantothenate kinase (308 aa).

G90–S97 serves as a coordination point for ATP.

Belongs to the prokaryotic pantothenate kinase family.

Its subcellular location is the cytoplasm. It carries out the reaction (R)-pantothenate + ATP = (R)-4'-phosphopantothenate + ADP + H(+). It functions in the pathway cofactor biosynthesis; coenzyme A biosynthesis; CoA from (R)-pantothenate: step 1/5. In Sorangium cellulosum (strain So ce56) (Polyangium cellulosum (strain So ce56)), this protein is Pantothenate kinase.